A 346-amino-acid polypeptide reads, in one-letter code: Holliday junction branch migration complex subunit RuvB (346 aa).

The interval 1-182 (MSEPARLISP…FGIPVRLSFY (182 aa)) is large ATPase domain (RuvB-L). ATP-binding positions include leucine 21, arginine 22, glycine 63, lysine 66, threonine 67, threonine 68, 129–131 (EDF), arginine 172, tyrosine 182, and arginine 219. Threonine 67 provides a ligand contact to Mg(2+). The small ATPAse domain (RuvB-S) stretch occupies residues 183–253 (TVEELELIVR…IADEALTRLL (71 aa)). A head domain (RuvB-H) region spans residues 256–346 (NVGFDQLDKR…AQFRLFQEDD (91 aa)). Arginine 292, arginine 311, and arginine 316 together coordinate DNA.

This sequence belongs to the RuvB family. In terms of assembly, homohexamer. Forms an RuvA(8)-RuvB(12)-Holliday junction (HJ) complex. HJ DNA is sandwiched between 2 RuvA tetramers; dsDNA enters through RuvA and exits via RuvB. An RuvB hexamer assembles on each DNA strand where it exits the tetramer. Each RuvB hexamer is contacted by two RuvA subunits (via domain III) on 2 adjacent RuvB subunits; this complex drives branch migration. In the full resolvosome a probable DNA-RuvA(4)-RuvB(12)-RuvC(2) complex forms which resolves the HJ.

The protein resides in the cytoplasm. It carries out the reaction ATP + H2O = ADP + phosphate + H(+). Functionally, the RuvA-RuvB-RuvC complex processes Holliday junction (HJ) DNA during genetic recombination and DNA repair, while the RuvA-RuvB complex plays an important role in the rescue of blocked DNA replication forks via replication fork reversal (RFR). RuvA specifically binds to HJ cruciform DNA, conferring on it an open structure. The RuvB hexamer acts as an ATP-dependent pump, pulling dsDNA into and through the RuvAB complex. RuvB forms 2 homohexamers on either side of HJ DNA bound by 1 or 2 RuvA tetramers; 4 subunits per hexamer contact DNA at a time. Coordinated motions by a converter formed by DNA-disengaged RuvB subunits stimulates ATP hydrolysis and nucleotide exchange. Immobilization of the converter enables RuvB to convert the ATP-contained energy into a lever motion, pulling 2 nucleotides of DNA out of the RuvA tetramer per ATP hydrolyzed, thus driving DNA branch migration. The RuvB motors rotate together with the DNA substrate, which together with the progressing nucleotide cycle form the mechanistic basis for DNA recombination by continuous HJ branch migration. Branch migration allows RuvC to scan DNA until it finds its consensus sequence, where it cleaves and resolves cruciform DNA. The protein is Holliday junction branch migration complex subunit RuvB of Rhizobium etli (strain CIAT 652).